We begin with the raw amino-acid sequence, 348 residues long: MGEASRQQRAWNREMTVTTNLSLDIDKYPRDLLRGFMSENGGGRVFHGGETNCDDESTIELNLGLSLGGRFGVDKTPRKLKRSSSVLDTVPFNDSTVAEPENYTVGLERTTSLPAEMEEEWRKRKEMQSLRRMEAKRRRCEKQSFRVGNSDDQTVSFENERWVTASKSGFLQRHLVSSNRQVCGVDSDGGGATGGGSSSSLSELDNKNQQGSSNSCNDERSPKIVAGCSSNSGSQGTERPSVTRANKVNENENEKRVRSEDSVDRKGKGMATSTGLVDMPCVFTKGDGPNGRRVDGILYKYGKGEEVRIMCICHGSFLTPAEFVKHGGGGDVDRPLRHIVVNTSSSTF.

A disordered region spans residues 186–272; it reads DSDGGGATGG…VDRKGKGMAT (87 aa). A compositionally biased stretch (gly residues) spans 187–197; the sequence is SDGGGATGGGS. Composition is skewed to polar residues over residues 207-216 and 228-244; these read KNQQGSSNSC and CSSNSGSQGTERPSVTR. The segment covering 247 to 267 has biased composition (basic and acidic residues); sequence KVNENENEKRVRSEDSVDRKG.

The protein belongs to the Ninja family. As to quaternary structure, forms a homodimer and heterodimer with AFP1 and AFP3. Interacts with ABI5/DPBF1, DPBF2, AREB3/DPBF3, EEL/DPBF4, ABF1, ABF3/DPBF5 and ABF4/AREB2.

It is found in the nucleus. Functionally, acts as a negative regulator of abscisic acid (ABA) response during germination through the ubiquitin-mediated proteolysis of ABI5/DPBF1. This chain is Ninja-family protein AFP2 (AFP2), found in Arabidopsis thaliana (Mouse-ear cress).